Here is a 119-residue protein sequence, read N- to C-terminus: MANSSFKLEHPLERRQIESSRIREKYPDRIPVIVERAERSDVPNIDKKKYLVPADLTVGQFVYVVRKRIKLSAEKAIFVFVKNTLPPTAAMMSAIYDENKDEDGFLYMTYSGENTFGLV.

Gly117 carries the Phosphatidylethanolamine amidated glycine lipid modification. Positions 118–119 (LV) are cleaved as a propeptide — removed in mature form.

The protein belongs to the ATG8 family. Interacts with ATG4. Interacts with NBR1. Post-translationally, the C-terminal 2 residues are removed by ATG4 to expose Gly-117 at the C-terminus. This Gly-117 forms then a thioester bond with the 'Cys-558' of ATG7 (E1-like activating enzyme) before being transferred to the 'Cys-258' of ATG3 (the specific E2 conjugating enzyme), in order to be finally amidated with phosphatidylethanolamine. This lipid modification anchors ATG8 to autophagosomes. As to expression, constitutively expressed.

It is found in the cytoplasmic vesicle. Its subcellular location is the autophagosome membrane. The protein resides in the vacuole membrane. The protein localises to the cytoplasm. It localises to the cytoskeleton. Functionally, ubiquitin-like modifier involved in autophagosomes formation. May mediate the delivery of the autophagosomes to the vacuole via the microtubule cytoskeleton. The chain is Autophagy-related protein 8c (ATG8C) from Arabidopsis thaliana (Mouse-ear cress).